The following is a 380-amino-acid chain: Cytochrome b (380 aa).

Transmembrane regions (helical) follow at residues Phe34 to Ala54, Trp78 to Ile99, Trp114 to Leu134, and Phe179 to Thr199. His84 and His98 together coordinate heme b. 2 residues coordinate heme b: His183 and His197. Residue His202 coordinates a ubiquinone. The next 4 membrane-spanning stretches (helical) occupy residues Leu227–Ser247, Leu289–His309, Leu321–Ser341, and Phe348–Pro368.

Belongs to the cytochrome b family. In terms of assembly, the cytochrome bc1 complex contains 11 subunits: 3 respiratory subunits (MT-CYB, CYC1 and UQCRFS1), 2 core proteins (UQCRC1 and UQCRC2) and 6 low-molecular weight proteins (UQCRH/QCR6, UQCRB/QCR7, UQCRQ/QCR8, UQCR10/QCR9, UQCR11/QCR10 and a cleavage product of UQCRFS1). This cytochrome bc1 complex then forms a dimer. It depends on heme b as a cofactor.

The protein localises to the mitochondrion inner membrane. In terms of biological role, component of the ubiquinol-cytochrome c reductase complex (complex III or cytochrome b-c1 complex) that is part of the mitochondrial respiratory chain. The b-c1 complex mediates electron transfer from ubiquinol to cytochrome c. Contributes to the generation of a proton gradient across the mitochondrial membrane that is then used for ATP synthesis. The polypeptide is Cytochrome b (MT-CYB) (Balearica regulorum (Grey crowned-crane)).